A 465-amino-acid chain; its full sequence is Iron-sulfur cluster assembly SufBD family protein SSP1857 (465 aa).

Belongs to the iron-sulfur cluster assembly SufBD family.

This chain is Iron-sulfur cluster assembly SufBD family protein SSP1857, found in Staphylococcus saprophyticus subsp. saprophyticus (strain ATCC 15305 / DSM 20229 / NCIMB 8711 / NCTC 7292 / S-41).